A 447-amino-acid chain; its full sequence is Tubulin beta chain (447 aa).

GTP contacts are provided by Gln11, Glu69, Ser138, Gly142, Thr143, Gly144, Asn204, and Asn226. Glu69 lines the Mg(2+) pocket. Residues 427–447 (EAHMDDEEAEEAYEDEAPPEE) form a disordered region. Residues 430 to 447 (MDDEEAEEAYEDEAPPEE) are compositionally biased toward acidic residues.

This sequence belongs to the tubulin family. In terms of assembly, dimer of alpha and beta chains. A typical microtubule is a hollow water-filled tube with an outer diameter of 25 nm and an inner diameter of 15 nM. Alpha-beta heterodimers associate head-to-tail to form protofilaments running lengthwise along the microtubule wall with the beta-tubulin subunit facing the microtubule plus end conferring a structural polarity. Microtubules usually have 13 protofilaments but different protofilament numbers can be found in some organisms and specialized cells. Requires Mg(2+) as cofactor.

Its subcellular location is the cytoplasm. It is found in the cytoskeleton. In terms of biological role, tubulin is the major constituent of microtubules, a cylinder consisting of laterally associated linear protofilaments composed of alpha- and beta-tubulin heterodimers. Microtubules grow by the addition of GTP-tubulin dimers to the microtubule end, where a stabilizing cap forms. Below the cap, tubulin dimers are in GDP-bound state, owing to GTPase activity of alpha-tubulin. The polypeptide is Tubulin beta chain (TBB1) (Uromyces fabae (Rust fungus)).